Reading from the N-terminus, the 75-residue chain is Large ribosomal subunit protein eL14 (75 aa).

It belongs to the eukaryotic ribosomal protein eL14 family.

This chain is Large ribosomal subunit protein eL14, found in Methanothermobacter thermautotrophicus (strain ATCC 29096 / DSM 1053 / JCM 10044 / NBRC 100330 / Delta H) (Methanobacterium thermoautotrophicum).